A 496-amino-acid polypeptide reads, in one-letter code: Gamma-aminobutyric acid receptor subunit beta-like (496 aa).

Positions 1–20 form a signal peptide, or 27; that stretch reads MTCFTRVGVSCGLFFFLLGA. At 21–258 the chain is on the extracellular side; the sequence is QLQLIRCIRK…SFKLQRNIGY (238 aa). N-linked (GlcNAc...) asparagine glycans are attached at residues Asn39 and Asn189. An intrachain disulfide couples Cys176 to Cys190. Transmembrane regions (helical) follow at residues 259–280, 285–306, and 318–342; these read FVFQ…SFWI, TSAR…STGV, and AIDI…AVNY. Residues 343–472 are Cytoplasmic-facing; the sequence is TYWGKRAKKK…KIKDVNIIDK (130 aa). Residues 473–494 form a helical membrane-spanning segment; that stretch reads YSRMIFPISFLAFNLGYWLFYI.

It belongs to the ligand-gated ion channel (TC 1.A.9) family. Gamma-aminobutyric acid receptor (TC 1.A.9.5) subfamily. In terms of assembly, generally pentameric. There are five types of GABA(A) receptor chains: alpha, beta, gamma, delta, and rho. Interacts with Grd (alpha chain).

It localises to the postsynaptic cell membrane. It is found in the cell membrane. Functionally, GABA, an inhibitory neurotransmitter, mediates neuronal inhibition by binding to the GABA receptor and opening an integral chloride channel. Combines with the ligand-gated ion channel subunit GRD to form cation-selective GABA-gated ion channels when coexpressed in Xenopus laevis oocytes. The sequence is that of Gamma-aminobutyric acid receptor subunit beta-like (Lcch3) from Drosophila melanogaster (Fruit fly).